The primary structure comprises 271 residues: 3-methyl-2-oxobutanoate hydroxymethyltransferase (271 aa).

The Mg(2+) site is built by aspartate 53 and aspartate 92. 3-methyl-2-oxobutanoate is bound by residues 53 to 54, aspartate 92, and lysine 120; that span reads DS. Glutamate 122 serves as a coordination point for Mg(2+). The Proton acceptor role is filled by glutamate 189.

This sequence belongs to the PanB family. In terms of assembly, homodecamer; pentamer of dimers. Mg(2+) is required as a cofactor.

It is found in the cytoplasm. The enzyme catalyses 3-methyl-2-oxobutanoate + (6R)-5,10-methylene-5,6,7,8-tetrahydrofolate + H2O = 2-dehydropantoate + (6S)-5,6,7,8-tetrahydrofolate. It participates in cofactor biosynthesis; (R)-pantothenate biosynthesis; (R)-pantoate from 3-methyl-2-oxobutanoate: step 1/2. Its function is as follows. Catalyzes the reversible reaction in which hydroxymethyl group from 5,10-methylenetetrahydrofolate is transferred onto alpha-ketoisovalerate to form ketopantoate. The protein is 3-methyl-2-oxobutanoate hydroxymethyltransferase of Burkholderia thailandensis (strain ATCC 700388 / DSM 13276 / CCUG 48851 / CIP 106301 / E264).